The chain runs to 182 residues: Sec-independent protein translocase protein TatB (182 aa).

Residues 1–21 (MFDIGFSELLLVFVIGLIVLG) form a helical membrane-spanning segment. Disordered regions lie at residues 88–107 (AAES…ASDE) and 121–182 (TQHE…SDKP). The segment covering 168–182 (AAPVVESSPSSSDKP) has biased composition (low complexity).

It belongs to the TatB family. As to quaternary structure, the Tat system comprises two distinct complexes: a TatABC complex, containing multiple copies of TatA, TatB and TatC subunits, and a separate TatA complex, containing only TatA subunits. Substrates initially bind to the TatABC complex, which probably triggers association of the separate TatA complex to form the active translocon.

It is found in the cell inner membrane. Functionally, part of the twin-arginine translocation (Tat) system that transports large folded proteins containing a characteristic twin-arginine motif in their signal peptide across membranes. Together with TatC, TatB is part of a receptor directly interacting with Tat signal peptides. TatB may form an oligomeric binding site that transiently accommodates folded Tat precursor proteins before their translocation. This Salmonella typhi protein is Sec-independent protein translocase protein TatB.